A 510-amino-acid polypeptide reads, in one-letter code: Portal protein (510 aa).

Belongs to the podoviridae head-to-tail connector protein family. As to quaternary structure, homododecamer.

The protein resides in the virion. Functionally, forms the portal vertex of the capsid. This portal plays critical roles in head assembly, genome packaging, neck/tail attachment, and genome ejection. The portal protein multimerizes as a single ring-shaped homododecamer arranged around a central channel. This Pseudomonas phage phiKMV protein is Portal protein.